Reading from the N-terminus, the 252-residue chain is Probable NADP-dependent dehydrogenase HI_1430 (252 aa).

7–31 (LVTGATAGFGLAICKKLIEAGYKVI) is an NADP(+) binding site. Ser137 lines the substrate pocket. The Proton acceptor role is filled by Tyr150.

This sequence belongs to the short-chain dehydrogenases/reductases (SDR) family.

In Haemophilus influenzae (strain ATCC 51907 / DSM 11121 / KW20 / Rd), this protein is Probable NADP-dependent dehydrogenase HI_1430.